The sequence spans 177 residues: Protein SPMIP1 (177 aa).

Positions 47–80 are disordered; it reads SRLPRKLPTLLPQASVAPPPPASKTTPSKAPSPA.

This chain is Protein SPMIP1 (Spmip1), found in Mus musculus (Mouse).